Here is a 288-residue protein sequence, read N- to C-terminus: MAAKIIDGKTIAQQVRSEVAQKVQARVAAGLRAPGLAVVLVGSNPASQIYVASKRKACEEVGFVSRSYDLPETTSEAELLELIDTLNADNTIDGILVQLPLPAGIDNVKVLERIAPDKDVDGFHPYNVGRLCQRAPRLRPCTPRGIVTLLERYNIDTFGLNAVVIGASNIVGRPMSMELLLAGCTTTVTHRFTKDLRRHVEHADLLIVAVGKPGFIPGEWIKEGAIVIDVGINRLENGKVVGDVVFEDAAARASYITPVPGGVGPMTVATLIENTLQACVEYHDPQGK.

Residues 166 to 168 (GAS) and Ile232 each bind NADP(+).

The protein belongs to the tetrahydrofolate dehydrogenase/cyclohydrolase family. As to quaternary structure, homodimer.

The enzyme catalyses (6R)-5,10-methylene-5,6,7,8-tetrahydrofolate + NADP(+) = (6R)-5,10-methenyltetrahydrofolate + NADPH. It catalyses the reaction (6R)-5,10-methenyltetrahydrofolate + H2O = (6R)-10-formyltetrahydrofolate + H(+). The protein operates within one-carbon metabolism; tetrahydrofolate interconversion. In terms of biological role, catalyzes the oxidation of 5,10-methylenetetrahydrofolate to 5,10-methenyltetrahydrofolate and then the hydrolysis of 5,10-methenyltetrahydrofolate to 10-formyltetrahydrofolate. In Citrobacter koseri (strain ATCC BAA-895 / CDC 4225-83 / SGSC4696), this protein is Bifunctional protein FolD.